The chain runs to 249 residues: Ubiquinone biosynthesis protein COQ4 homolog, mitochondrial (249 aa).

The Zn(2+) site is built by H134, D135, H138, and E150.

Belongs to the COQ4 family. In terms of assembly, component of a multi-subunit COQ enzyme complex. The cofactor is Zn(2+).

It is found in the mitochondrion inner membrane. It carries out the reaction a 4-hydroxy-3-methoxy-5-(all-trans-polyprenyl)benzoate + H(+) = a 2-methoxy-6-(all-trans-polyprenyl)phenol + CO2. It functions in the pathway cofactor biosynthesis; ubiquinone biosynthesis. Its function is as follows. Lyase that catalyzes the C1-decarboxylation of 4-hydroxy-3-methoxy-5-(all-trans-polyprenyl)benzoic acid into 2-methoxy-6-(all-trans-polyprenyl)phenol during ubiquinone biosynthesis. This Trypanosoma brucei brucei (strain 927/4 GUTat10.1) protein is Ubiquinone biosynthesis protein COQ4 homolog, mitochondrial.